Here is a 212-residue protein sequence, read N- to C-terminus: Deoxyribose-phosphate aldolase (212 aa).

The active-site Proton donor/acceptor is Asp89. The active-site Schiff-base intermediate with acetaldehyde is the Lys151. Lys180 (proton donor/acceptor) is an active-site residue.

The protein belongs to the DeoC/FbaB aldolase family. DeoC type 1 subfamily.

It is found in the cytoplasm. The enzyme catalyses 2-deoxy-D-ribose 5-phosphate = D-glyceraldehyde 3-phosphate + acetaldehyde. It participates in carbohydrate degradation; 2-deoxy-D-ribose 1-phosphate degradation; D-glyceraldehyde 3-phosphate and acetaldehyde from 2-deoxy-alpha-D-ribose 1-phosphate: step 2/2. Functionally, catalyzes a reversible aldol reaction between acetaldehyde and D-glyceraldehyde 3-phosphate to generate 2-deoxy-D-ribose 5-phosphate. This chain is Deoxyribose-phosphate aldolase, found in Clostridium botulinum (strain ATCC 19397 / Type A).